The primary structure comprises 228 residues: LHFPL tetraspan subfamily member 2 protein (228 aa).

4 helical membrane-spanning segments follow: residues 11-31, 102-122, 132-152, and 181-201; these read MLWTLLSIVVAFAELIAFMSA, IFLAVGIFILCMVALVSVFTM, IFNVCGLLQGIAGLFLILGLI, and LGWAFYTAIGGTVLTFICAVF.

It belongs to the LHFP family. In terms of tissue distribution, expressed in all tissues and cell lines examined except brain and peripheral blood leukocytes.

Its subcellular location is the membrane. Functionally, plays a role in female and male fertility. Involved in distal reproductive tract development. The sequence is that of LHFPL tetraspan subfamily member 2 protein from Homo sapiens (Human).